The chain runs to 100 residues: UPF0298 protein lp_2135 (100 aa).

This sequence belongs to the UPF0298 family.

The protein resides in the cytoplasm. The protein is UPF0298 protein lp_2135 of Lactiplantibacillus plantarum (strain ATCC BAA-793 / NCIMB 8826 / WCFS1) (Lactobacillus plantarum).